Here is a 433-residue protein sequence, read N- to C-terminus: Ornithine decarboxylase 1B, chloroplastic (433 aa).

N6-(pyridoxal phosphate)lysine is present on Lys-96. Pyridoxal 5'-phosphate-binding positions include Ser-228, Gly-266, and 299–302 (EPGR). Position 342–343 (342–343 (YD)) interacts with substrate. The active-site Proton donor; shared with dimeric partner is Cys-378. Asp-379 contacts substrate. Tyr-407 contributes to the pyridoxal 5'-phosphate binding site.

The protein belongs to the Orn/Lys/Arg decarboxylase class-II family. Homodimer. Only the dimer is catalytically active, as the active sites are constructed of residues from both monomers. The cofactor is pyridoxal 5'-phosphate.

It localises to the plastid. It is found in the chloroplast. The enzyme catalyses L-ornithine + H(+) = putrescine + CO2. Its pathway is alkaloid biosynthesis; nicotine biosynthesis. The protein operates within amine and polyamine biosynthesis; putrescine biosynthesis via L-ornithine pathway; putrescine from L-ornithine: step 1/1. Its function is as follows. Involved in the biosynthesis of pyridine alkaloid natural products, leading mainly to the production of anabasine, anatabine, nicotine and nornicotine, effective deterrents against herbivores with antiparasitic and pesticide properties (neurotoxins); nornicotine serves as the precursor in the synthesis of the carcinogen compound N'-nitrosonornicotine (NNN). Catalyzes the first and rate-limiting step of polyamine biosynthesis that converts ornithine into putrescine, which is the precursor for the polyamines, spermidine and spermine. Polyamines are essential for cell proliferation and are implicated in cellular processes, ranging from DNA replication to apoptosis. In Nicotiana tabacum (Common tobacco), this protein is Ornithine decarboxylase 1B, chloroplastic.